The primary structure comprises 991 residues: Seizure protein 6 (991 aa).

The first 19 residues, 1-19 (MRPAALLLLPSLLALLAHG), serve as a signal peptide directing secretion. Over 20–922 (LSSEAPITGE…AASSALDAAH (903 aa)) the chain is Extracellular. Positions 79 to 193 (EGLEREEAPQ…QEGPGDMDRP (115 aa)) are disordered. The segment covering 119-132 (TSPTPAVAAAPTQP) has biased composition (low complexity). Over residues 175–184 (PPSQAWTPTQ) the composition is skewed to polar residues. An intrachain disulfide couples cysteine 241 to cysteine 268. Residues 241 to 353 (CSWNFSGPEG…HFRYQAYLLS (113 aa)) form the CUB 1 domain. Asparagine 286 carries N-linked (GlcNAc...) asparagine glycosylation. The 60-residue stretch at 352–411 (LSCHFPRRPAYGDVTVTSLHPGGSAHFHCATGYQLKGARFLTCLNATQPFWDSQEPVCIA) folds into the Sushi 1 domain. Cystine bridges form between cysteine 354-cysteine 394, cysteine 380-cysteine 409, cysteine 413-cysteine 440, cysteine 529-cysteine 571, cysteine 556-cysteine 586, cysteine 590-cysteine 616, cysteine 707-cysteine 749, cysteine 735-cysteine 762, cysteine 768-cysteine 810, cysteine 796-cysteine 827, cysteine 835-cysteine 877, and cysteine 863-cysteine 892. N-linked (GlcNAc...) asparagine glycosylation is found at asparagine 396, asparagine 433, and asparagine 538. The 112-residue stretch at 413–524 (CGGVIRNATT…AGMALRYEAF (112 aa)) folds into the CUB 2 domain. One can recognise a Sushi 2 domain in the interval 527–588 (GHCYEPFVKY…WNETEPACRA (62 aa)). In terms of domain architecture, CUB 3 spans 590–701 (CSGEITDSAG…QGFVIHFFEV (112 aa)). Sushi domains follow at residues 705 to 764 (DTCP…SCQR), 766 to 829 (TSCH…KCLL), and 833 to 894 (KPCH…ICRA). The chain crosses the membrane as a helical span at residues 923–943 (LAAAIFLPLVAMVLLVGGVYL). Residues 944 to 991 (YFSRFQGKSPLQLPRTHPRPYNRITVESAFDNPTYETGSLSFAGDERI) lie on the Cytoplasmic side of the membrane.

This sequence belongs to the SEZ6 family. Glycosylated. Brain-specific. Expressed in extrasynaptic and synaptic subcellular fractions (at protein level). Expression correlates with the most active periods of cortical neurogenesis and neuronal maturation. Expression is restricted to the gray matter with higher levels in the forebrain including the olfactory bulb, anterior olfactory nuclei, olfactory tubercle, striatum, hippocampal CA1 pyramidal cell layer and cerebral cortex. Expression is up-regulated with the convulsant drug, pentylenetetrazole.

Its subcellular location is the cell membrane. It is found in the cell projection. The protein resides in the dendrite. The protein localises to the synapse. It localises to the secreted. Its subcellular location is the cytoplasm. Functionally, may play a role in cell-cell recognition and in neuronal membrane signaling. Seems to be important for the achievement of the necessary balance between dendrite elongation and branching during the elaboration of a complex dendritic arbor. Involved in the development of appropriate excitatory synaptic connectivity. The protein is Seizure protein 6 (Sez6) of Mus musculus (Mouse).